The chain runs to 316 residues: Methionyl-tRNA formyltransferase (316 aa).

112–115 (SLLP) contacts (6S)-5,6,7,8-tetrahydrofolate.

The protein belongs to the Fmt family.

It carries out the reaction L-methionyl-tRNA(fMet) + (6R)-10-formyltetrahydrofolate = N-formyl-L-methionyl-tRNA(fMet) + (6S)-5,6,7,8-tetrahydrofolate + H(+). Its function is as follows. Attaches a formyl group to the free amino group of methionyl-tRNA(fMet). The formyl group appears to play a dual role in the initiator identity of N-formylmethionyl-tRNA by promoting its recognition by IF2 and preventing the misappropriation of this tRNA by the elongation apparatus. In Actinobacillus pleuropneumoniae serotype 7 (strain AP76), this protein is Methionyl-tRNA formyltransferase.